The sequence spans 622 residues: Low affinity potassium transport system protein Kup (622 aa).

12 consecutive transmembrane segments (helical) span residues leucine 9 to leucine 29, phenylalanine 52 to valine 72, threonine 99 to isoleucine 119, proline 137 to isoleucine 157, valine 165 to valine 185, valine 213 to alanine 233, tryptophan 247 to leucine 267, proline 276 to alanine 296, isoleucine 337 to phenylalanine 357, leucine 363 to cysteine 383, leucine 394 to alanine 414, and isoleucine 419 to threonine 439.

The protein belongs to the HAK/KUP transporter (TC 2.A.72) family.

Its subcellular location is the cell inner membrane. It catalyses the reaction K(+)(in) + H(+)(in) = K(+)(out) + H(+)(out). Functionally, responsible for the low-affinity transport of potassium into the cell. Likely operates as a K(+):H(+) symporter. The protein is Low affinity potassium transport system protein Kup of Sodalis glossinidius (strain morsitans).